A 312-amino-acid polypeptide reads, in one-letter code: tRNA pseudouridine synthase B (312 aa).

The Nucleophile role is filled by D46. Residues Y74, Y177, and L198 each coordinate substrate.

This sequence belongs to the pseudouridine synthase TruB family. Type 1 subfamily.

The enzyme catalyses uridine(55) in tRNA = pseudouridine(55) in tRNA. Responsible for synthesis of pseudouridine from uracil-55 in the psi GC loop of transfer RNAs. In Buchnera aphidicola subsp. Schizaphis graminum (strain Sg), this protein is tRNA pseudouridine synthase B.